The chain runs to 36 residues: Termicin (36 aa).

Intrachain disulfides connect C2-C24, C7-C29, and C11-C31. G36 bears the Glycine amide mark.

In terms of tissue distribution, expressed in salivary glands and hemocytes.

Its subcellular location is the secreted. In terms of biological role, weak activity against Gram-positive bacteria B.megaterium, S.pyogenes and M.luteus, strong activity against yeasts C.albicans, C.neoformans and S.cerevisiae and filamentous fungi F.oxysporum, F.culmorum, N.crassa and N.hematococca. Less active against filamentous fungus T.viride. Inactive against Gram-positive bacteria A.viridans and S.aureus, filamentous fungi A.fumigatus and B.bassiana and yeast C.glabrata. This Pseudacanthotermes spiniger protein is Termicin.